Consider the following 314-residue polypeptide: DNA-directed RNA polymerase subunit alpha (314 aa).

The interval 1 to 228 (MAQYTIECVE…DQLRPLQEIT (228 aa)) is alpha N-terminal domain (alpha-NTD). The alpha C-terminal domain (alpha-CTD) stretch occupies residues 241 to 314 (NTVGQVPIEE…SLPKDKPARS (74 aa)).

It belongs to the RNA polymerase alpha chain family. As to quaternary structure, in cyanobacteria the RNAP catalytic core is composed of 2 alpha, 1 beta, 1 beta', 1 gamma and 1 omega subunit. When a sigma factor is associated with the core the holoenzyme is formed, which can initiate transcription.

It catalyses the reaction RNA(n) + a ribonucleoside 5'-triphosphate = RNA(n+1) + diphosphate. DNA-dependent RNA polymerase catalyzes the transcription of DNA into RNA using the four ribonucleoside triphosphates as substrates. In Gloeobacter violaceus (strain ATCC 29082 / PCC 7421), this protein is DNA-directed RNA polymerase subunit alpha.